The chain runs to 153 residues: Large ribosomal subunit protein uL15 (153 aa).

The protein belongs to the universal ribosomal protein uL15 family. Part of the 50S ribosomal subunit.

Functionally, binds to the 23S rRNA. The chain is Large ribosomal subunit protein uL15 from Pelagibacter ubique (strain HTCC1062).